The primary structure comprises 129 residues: Small ribosomal subunit protein uS11 (129 aa).

The protein belongs to the universal ribosomal protein uS11 family. As to quaternary structure, part of the 30S ribosomal subunit. Interacts with proteins S7 and S18. Binds to IF-3.

Functionally, located on the platform of the 30S subunit, it bridges several disparate RNA helices of the 16S rRNA. Forms part of the Shine-Dalgarno cleft in the 70S ribosome. The sequence is that of Small ribosomal subunit protein uS11 from Sphingopyxis alaskensis (strain DSM 13593 / LMG 18877 / RB2256) (Sphingomonas alaskensis).